The primary structure comprises 241 residues: Platelet-derived growth factor subunit B (241 aa).

The first 20 residues, 1-20 (MNRCWALFLPLCCYLRLVSA), serve as a signal peptide directing secretion. A propeptide spans 21 to 81 (EGDPIPEELY…ELESSSRGRR (61 aa)) (removed in mature form). Asn63 carries N-linked (GlcNAc...) asparagine glycosylation. Cystine bridges form between Cys97–Cys141, Cys130–Cys178, and Cys134–Cys180. Positions 191 to 241 (RSPGTSREQRAKTPQARVTIRTVRIRRPPKGKHRKFKHTHDKAALKETLGA) are cleaved as a propeptide — removed in mature form. A compositionally biased stretch (basic residues) spans 217 to 230 (RPPKGKHRKFKHTH). Positions 217–241 (RPPKGKHRKFKHTHDKAALKETLGA) are disordered.

Belongs to the PDGF/VEGF growth factor family. Antiparallel homodimer; disulfide-linked. Antiparallel heterodimer with PDGFA; disulfide-linked. The PDGFB homodimer interacts with PDGFRA and PDGFRB homodimers, and with heterodimers formed by PDGFRA and PDGFRB. The heterodimer composed of PDGFA and PDGFB interacts with PDGFRB homodimers, and with heterodimers formed by PDGFRA and PDGFRB. Interacts with XLKD1. Interacts with LRP1. Interacts with SORL1 (via the N-terminal ectodomain). Interacts with CD82; this interaction inhibits PDGFB-mediated signaling pathway. As to expression, localized to vascular smooth muscle cells. Also weakly expressed by cortical interstitial cells but absent in tubules. Up-regulated in areas of renal fibrosis. In mice with unilateral ureteral obstruction, an increased expression in interstitial cells and in some tubules observed after day 4.

It localises to the secreted. Functionally, growth factor that plays an essential role in the regulation of embryonic development, cell proliferation, cell migration, survival and chemotaxis. Potent mitogen for cells of mesenchymal origin. Required for normal proliferation and recruitment of pericytes and vascular smooth muscle cells in the central nervous system, skin, lung, heart and placenta. Required for normal blood vessel development, and for normal development of kidney glomeruli. Plays an important role in wound healing. Signaling is modulated by the formation of heterodimers with PDGFA. The protein is Platelet-derived growth factor subunit B (Pdgfb) of Mus musculus (Mouse).